The sequence spans 99 residues: MEKYLLLLLLGIFLRVGFLQALTCVSCGRLNSSGICETAETSCEATNNRKCALRLLYKDGKFQYGFQGCLGTCFNYTKTNNNMVKEHKCCDHQNLCNKP.

The first 21 residues, 1 to 21, serve as a signal peptide directing secretion; sequence MEKYLLLLLLGIFLRVGFLQA. In terms of domain architecture, UPAR/Ly6 spans 22 to 99; it reads LTCVSCGRLN…CDHQNLCNKP (78 aa). 5 cysteine pairs are disulfide-bonded: Cys-24/Cys-51, Cys-27/Cys-36, Cys-43/Cys-69, Cys-73/Cys-89, and Cys-90/Cys-96. Asn-31 is a glycosylation site (N-linked (GlcNAc...) asparagine). Asn-75 is a glycosylation site (N-linked (GlcNAc...) asparagine).

This sequence belongs to the PATE family. Monomer. In terms of processing, glycosylated. As to expression, predominantly expressed in the seminal vesicles. Expressed in prostate, and to a lesser extent in the cauda epididymis.

Its subcellular location is the secreted. The sequence is that of Prostate and testis expressed protein 14 from Mus musculus (Mouse).